Here is a 339-residue protein sequence, read N- to C-terminus: Biotin synthase (339 aa).

Positions 55–282 (NAVQLSTLLS…KAVVRLSAGR (228 aa)) constitute a Radical SAM core domain. [4Fe-4S] cluster is bound by residues C70, C74, and C77. Positions 114, 145, 205, and 277 each coordinate [2Fe-2S] cluster.

This sequence belongs to the radical SAM superfamily. Biotin synthase family. As to quaternary structure, homodimer. [4Fe-4S] cluster is required as a cofactor. The cofactor is [2Fe-2S] cluster.

The catalysed reaction is (4R,5S)-dethiobiotin + (sulfur carrier)-SH + 2 reduced [2Fe-2S]-[ferredoxin] + 2 S-adenosyl-L-methionine = (sulfur carrier)-H + biotin + 2 5'-deoxyadenosine + 2 L-methionine + 2 oxidized [2Fe-2S]-[ferredoxin]. It functions in the pathway cofactor biosynthesis; biotin biosynthesis; biotin from 7,8-diaminononanoate: step 2/2. Its function is as follows. Catalyzes the conversion of dethiobiotin (DTB) to biotin by the insertion of a sulfur atom into dethiobiotin via a radical-based mechanism. The sequence is that of Biotin synthase from Burkholderia cenocepacia (strain ATCC BAA-245 / DSM 16553 / LMG 16656 / NCTC 13227 / J2315 / CF5610) (Burkholderia cepacia (strain J2315)).